The chain runs to 347 residues: Outer membrane protein A (347 aa).

Positions 1–21 (MKKQALTIIFLLVSLVTGIQA) are cleaved as a signal peptide. The next 8 membrane-spanning stretches (beta stranded) occupy residues 26–36 (HWYLGTKMGWS), 63–74 (APVFGLFLGYEF), 78–86 (FSFEIENDT), 105–116 (NSLQLATKLSYP), 121–129 (FHIYTQLGG), 154–163 (PNVSLGAEYI), 168–175 (FITRLDYT), and 194–202 (DVALSFGWK). A hinge-like region spans residues 207 to 218 (NINEIFSSYIPQ). An OmpA-like domain is found at 220 to 347 (SDKQYVALNE…RRVEIEVLSD (128 aa)). A disulfide bridge connects residues Cys-321 and Cys-333.

This sequence belongs to the outer membrane OOP (TC 1.B.6) superfamily. OmpA family. In terms of assembly, monomer and homodimer.

It is found in the cell outer membrane. With TolR probably plays a role in maintaining the position of the peptidoglycan cell wall in the periplasm. Acts as a porin with low permeability that allows slow penetration of small solutes; an internal gate slows down solute passage. This is Outer membrane protein A from Buchnera aphidicola subsp. Schizaphis graminum (strain Sg).